The following is a 275-amino-acid chain: NH(3)-dependent NAD(+) synthetase (275 aa).

47-54 (GISGGQDS) contacts ATP. A Mg(2+)-binding site is contributed by aspartate 53. A deamido-NAD(+)-binding site is contributed by arginine 141. An ATP-binding site is contributed by threonine 161. Glutamate 166 provides a ligand contact to Mg(2+). Lysine 174 and aspartate 181 together coordinate deamido-NAD(+). Residues lysine 190 and threonine 212 each contribute to the ATP site. 261–262 (HK) contributes to the deamido-NAD(+) binding site.

This sequence belongs to the NAD synthetase family. In terms of assembly, homodimer.

It carries out the reaction deamido-NAD(+) + NH4(+) + ATP = AMP + diphosphate + NAD(+) + H(+). The protein operates within cofactor biosynthesis; NAD(+) biosynthesis; NAD(+) from deamido-NAD(+) (ammonia route): step 1/1. Catalyzes the ATP-dependent amidation of deamido-NAD to form NAD. Uses ammonia as a nitrogen source. This is NH(3)-dependent NAD(+) synthetase from Lacticaseibacillus paracasei (strain ATCC 334 / BCRC 17002 / CCUG 31169 / CIP 107868 / KCTC 3260 / NRRL B-441) (Lactobacillus paracasei).